We begin with the raw amino-acid sequence, 204 residues long: Protein GrpE (204 aa).

The span at 1 to 12 (MSNQEKKMHEEE) shows a compositional bias: basic and acidic residues. The segment at 1–37 (MSNQEKKMHEEELQQQETVEADTEAEAEAVGTDADIE) is disordered.

This sequence belongs to the GrpE family. Homodimer.

The protein localises to the cytoplasm. In terms of biological role, participates actively in the response to hyperosmotic and heat shock by preventing the aggregation of stress-denatured proteins, in association with DnaK and GrpE. It is the nucleotide exchange factor for DnaK and may function as a thermosensor. Unfolded proteins bind initially to DnaJ; upon interaction with the DnaJ-bound protein, DnaK hydrolyzes its bound ATP, resulting in the formation of a stable complex. GrpE releases ADP from DnaK; ATP binding to DnaK triggers the release of the substrate protein, thus completing the reaction cycle. Several rounds of ATP-dependent interactions between DnaJ, DnaK and GrpE are required for fully efficient folding. The protein is Protein GrpE of Vibrio proteolyticus (Aeromonas proteolytica).